Here is a 79-residue protein sequence, read N- to C-terminus: Cell division protein ZapB (79 aa).

Positions 4-78 (EVFEKLEAKV…LQALLGKMEE (75 aa)) form a coiled coil.

The protein belongs to the ZapB family. In terms of assembly, homodimer. The ends of the coiled-coil dimer bind to each other, forming polymers. Interacts with FtsZ.

It is found in the cytoplasm. Non-essential, abundant cell division factor that is required for proper Z-ring formation. It is recruited early to the divisome by direct interaction with FtsZ, stimulating Z-ring assembly and thereby promoting cell division earlier in the cell cycle. Its recruitment to the Z-ring requires functional FtsA or ZipA. The polypeptide is Cell division protein ZapB (Cronobacter sakazakii (strain ATCC BAA-894) (Enterobacter sakazakii)).